Here is a 444-residue protein sequence, read N- to C-terminus: Aflatoxin biosynthesis regulatory protein (444 aa).

Residues 1–26 (MVDHISPRASPGPIRSSQTRRARKLR) form a disordered region. Residues 29-56 (CTSCASSKVRCTKEKPACARCIERGLAC) constitute a DNA-binding region (zn(2)-C6 fungal-type). A disordered region spans residues 64 to 167 (MGRNPRAPSP…QGLGGDLAGQ (104 aa)). The span at 106–116 (TQAHTHAHSHP) shows a compositional bias: basic residues. Residues 120 to 130 (PQSHPQSNQPP) are compositionally biased toward low complexity. The segment covering 136–149 (PNGSSSVSAIFSHQ) has biased composition (polar residues).

The protein localises to the nucleus. Its pathway is mycotoxin biosynthesis; aflatoxin biosynthesis. In terms of biological role, involved in the regulation of aflatoxin biosynthesis. May have a role in nitrate assimilation and sclerotial morphogenesis. The sequence is that of Aflatoxin biosynthesis regulatory protein (aflR) from Aspergillus parasiticus.